A 364-amino-acid polypeptide reads, in one-letter code: MNKLALYCRIGFEKEVAAEITDTAAERGVFGFARIQENAGYVIFECYQPGEADRLAREIPFTQLIFARQLVVVSDLLQNLPTTDRITPILQKYQEVSPHLKLQQSSELWVETADTNEAKELSAFCRKFTVPLRQALKKQGWLNFKQIKDSGMTLHCLFVRSDACYAGYSYNRNHSPYFMGIPRLKFPTEAPSRSTLKLEEAILTFIPREEESKRLNENMIGVDLGACPGGWTYQLVKRGLFVYAVDHGKMAASLHETGRIEHCSEDGFKFQPPKRKKADWLVCDMVEQPGRIVALIGKWLSNEWCHETIFNLKLPMKKRYTEVRRCLQKLADELTQSGLKFRMQAKHLYHDREEITVHVRTWRH.

S-adenosyl-L-methionine contacts are provided by residues serine 194, 227–230 (CPGG), aspartate 246, aspartate 266, and aspartate 284. The Proton acceptor role is filled by lysine 313.

The protein belongs to the class I-like SAM-binding methyltransferase superfamily. RNA methyltransferase RlmE family. RlmM subfamily. As to quaternary structure, monomer.

Its subcellular location is the cytoplasm. The catalysed reaction is cytidine(2498) in 23S rRNA + S-adenosyl-L-methionine = 2'-O-methylcytidine(2498) in 23S rRNA + S-adenosyl-L-homocysteine + H(+). Its function is as follows. Catalyzes the 2'-O-methylation at nucleotide C2498 in 23S rRNA. This Actinobacillus succinogenes (strain ATCC 55618 / DSM 22257 / CCUG 43843 / 130Z) protein is Ribosomal RNA large subunit methyltransferase M.